Consider the following 170-residue polypeptide: Large ribosomal subunit protein uL10 (170 aa).

Belongs to the universal ribosomal protein uL10 family. As to quaternary structure, part of the ribosomal stalk of the 50S ribosomal subunit. The N-terminus interacts with L11 and the large rRNA to form the base of the stalk. The C-terminus forms an elongated spine to which L12 dimers bind in a sequential fashion forming a multimeric L10(L12)X complex.

In terms of biological role, forms part of the ribosomal stalk, playing a central role in the interaction of the ribosome with GTP-bound translation factors. This is Large ribosomal subunit protein uL10 from Lactobacillus helveticus (strain DPC 4571).